We begin with the raw amino-acid sequence, 108 residues long: Tubulin-specific chaperone A (108 aa).

Ala2 is modified (N-acetylalanine).

Belongs to the TBCA family. In terms of assembly, supercomplex made of cofactors A to E. Cofactors A and D function by capturing and stabilizing tubulin in a quasi-native conformation. Cofactor E binds to the cofactor D-tubulin complex; interaction with cofactor C then causes the release of tubulin polypeptides that are committed to the native state.

The protein localises to the cytoplasm. It localises to the cytoskeleton. Its function is as follows. Tubulin-folding protein; involved in the early step of the tubulin folding pathway. This Homo sapiens (Human) protein is Tubulin-specific chaperone A (TBCA).